The following is a 294-amino-acid chain: 33 kDa chaperonin (294 aa).

Cystine bridges form between Cys-237/Cys-239 and Cys-270/Cys-273.

The protein belongs to the HSP33 family. In terms of processing, under oxidizing conditions two disulfide bonds are formed involving the reactive cysteines. Under reducing conditions zinc is bound to the reactive cysteines and the protein is inactive.

It is found in the cytoplasm. In terms of biological role, redox regulated molecular chaperone. Protects both thermally unfolding and oxidatively damaged proteins from irreversible aggregation. Plays an important role in the bacterial defense system toward oxidative stress. This is 33 kDa chaperonin from Geobacillus kaustophilus (strain HTA426).